The sequence spans 421 residues: Histidine--tRNA ligase (421 aa).

It belongs to the class-II aminoacyl-tRNA synthetase family. In terms of assembly, homodimer.

It localises to the cytoplasm. It catalyses the reaction tRNA(His) + L-histidine + ATP = L-histidyl-tRNA(His) + AMP + diphosphate + H(+). This is Histidine--tRNA ligase from Caldicellulosiruptor bescii (strain ATCC BAA-1888 / DSM 6725 / KCTC 15123 / Z-1320) (Anaerocellum thermophilum).